The chain runs to 503 residues: Maturase K (503 aa).

It belongs to the intron maturase 2 family. MatK subfamily.

It is found in the plastid. The protein resides in the chloroplast. Usually encoded in the trnK tRNA gene intron. Probably assists in splicing its own and other chloroplast group II introns. The polypeptide is Maturase K (Rubus ursinus (California blackberry)).